A 388-amino-acid chain; its full sequence is Succinate--CoA ligase [ADP-forming] subunit beta (388 aa).

Residues Lys9–Glu244 enclose the ATP-grasp domain. ATP is bound by residues Lys46, Gly53 to Gly55, Glu99, Cys102, and Glu107. Positions 199 and 213 each coordinate Mg(2+). Substrate-binding positions include Asn264 and Gly321–Met323.

It belongs to the succinate/malate CoA ligase beta subunit family. As to quaternary structure, heterotetramer of two alpha and two beta subunits. Mg(2+) is required as a cofactor.

It carries out the reaction succinate + ATP + CoA = succinyl-CoA + ADP + phosphate. The enzyme catalyses GTP + succinate + CoA = succinyl-CoA + GDP + phosphate. It participates in carbohydrate metabolism; tricarboxylic acid cycle; succinate from succinyl-CoA (ligase route): step 1/1. Succinyl-CoA synthetase functions in the citric acid cycle (TCA), coupling the hydrolysis of succinyl-CoA to the synthesis of either ATP or GTP and thus represents the only step of substrate-level phosphorylation in the TCA. The beta subunit provides nucleotide specificity of the enzyme and binds the substrate succinate, while the binding sites for coenzyme A and phosphate are found in the alpha subunit. The chain is Succinate--CoA ligase [ADP-forming] subunit beta from Staphylococcus aureus (strain Mu3 / ATCC 700698).